Reading from the N-terminus, the 180-residue chain is Negative modulator of initiation of replication (180 aa).

Interaction with DNA regions lie at residues 86 to 87 (AV), 115 to 119 (RTRVY), and 149 to 155 (NTNTGRK).

It belongs to the SeqA family. Homodimer. Polymerizes to form helical filaments.

The protein localises to the cytoplasm. Functionally, negative regulator of replication initiation, which contributes to regulation of DNA replication and ensures that replication initiation occurs exactly once per chromosome per cell cycle. Binds to pairs of hemimethylated GATC sequences in the oriC region, thus preventing assembly of replication proteins and re-initiation at newly replicated origins. Repression is relieved when the region becomes fully methylated. The protein is Negative modulator of initiation of replication of Enterobacter sp. (strain 638).